We begin with the raw amino-acid sequence, 95 residues long: Defensin alpha 4 (95 aa).

An N-terminal signal peptide occupies residues 1-19 (MRTLALLAAILLVALQAQA). Positions 20–62 (EHISVSIDEVVDQQPPQAEDQDVAIYVKEHESSALEALGVKAG) are excised as a propeptide. 3 disulfide bridges follow: Cys-65/Cys-93, Cys-67/Cys-82, and Cys-72/Cys-92.

Belongs to the alpha-defensin family.

It localises to the secreted. Functionally, host-defense peptide that has antimicrobial activity. Inhibits corticotropin (ACTH)-stimulated corticosterone production (in vitro). The polypeptide is Defensin alpha 4 (Oryctolagus cuniculus (Rabbit)).